The following is a 370-amino-acid chain: Capsular polysaccharide phosphotransferase (370 aa).

It belongs to the stealth family.

Its function is as follows. Part of a capsular polysaccharide synthesis locus. The chain is Capsular polysaccharide phosphotransferase from Actinobacillus suis.